Consider the following 90-residue polypeptide: uncharacterized protein (90 aa).

A helical transmembrane segment spans residues 15–34; it reads HVLAISTFIATAAVASYFTT. The segment at 34 to 65 is disordered; the sequence is TKPKTKNEGKNSSALSQQKSGESSNSDAMGKD. Residues 43-60 show a composition bias toward polar residues; the sequence is KNSSALSQQKSGESSNSD. N-linked (GlcNAc...) asparagine glycosylation is present at asparagine 44.

Its subcellular location is the mitochondrion membrane. This is an uncharacterized protein from Saccharomyces cerevisiae (strain ATCC 204508 / S288c) (Baker's yeast).